Consider the following 350-residue polypeptide: Probable L-aspartate decarboxylase (350 aa).

Lys-206 is modified (N6-(pyridoxal phosphate)lysine).

This sequence belongs to the group II decarboxylase family. MfnA subfamily. Pyridoxal 5'-phosphate serves as cofactor.

It carries out the reaction L-aspartate + H(+) = beta-alanine + CO2. The protein operates within cofactor biosynthesis; coenzyme A biosynthesis. Its function is as follows. Catalyzes the decarboxylation of L-aspartate to produce beta-alanine. The sequence is that of Probable L-aspartate decarboxylase from Haloarcula marismortui (strain ATCC 43049 / DSM 3752 / JCM 8966 / VKM B-1809) (Halobacterium marismortui).